A 132-amino-acid polypeptide reads, in one-letter code: Small ribosomal subunit protein uS8 (132 aa).

It belongs to the universal ribosomal protein uS8 family. Part of the 30S ribosomal subunit. Contacts proteins S5 and S12.

One of the primary rRNA binding proteins, it binds directly to 16S rRNA central domain where it helps coordinate assembly of the platform of the 30S subunit. This Staphylococcus aureus (strain USA300) protein is Small ribosomal subunit protein uS8.